A 356-amino-acid polypeptide reads, in one-letter code: Phosphoribosylformylglycinamidine cyclo-ligase (356 aa).

This sequence belongs to the AIR synthase family.

The protein localises to the cytoplasm. The enzyme catalyses 2-formamido-N(1)-(5-O-phospho-beta-D-ribosyl)acetamidine + ATP = 5-amino-1-(5-phospho-beta-D-ribosyl)imidazole + ADP + phosphate + H(+). It participates in purine metabolism; IMP biosynthesis via de novo pathway; 5-amino-1-(5-phospho-D-ribosyl)imidazole from N(2)-formyl-N(1)-(5-phospho-D-ribosyl)glycinamide: step 2/2. The chain is Phosphoribosylformylglycinamidine cyclo-ligase from Desulfotalea psychrophila (strain LSv54 / DSM 12343).